The following is a 353-amino-acid chain: Protein RecA (353 aa).

67 to 74 (GPESSGKT) contacts ATP. Residues 330 to 353 (SNPNSTPDFSVDDSEGVAETNEDF) form a disordered region. The segment covering 339–353 (SVDDSEGVAETNEDF) has biased composition (acidic residues).

This sequence belongs to the RecA family.

The protein resides in the cytoplasm. Its function is as follows. Can catalyze the hydrolysis of ATP in the presence of single-stranded DNA, the ATP-dependent uptake of single-stranded DNA by duplex DNA, and the ATP-dependent hybridization of homologous single-stranded DNAs. It interacts with LexA causing its activation and leading to its autocatalytic cleavage. The protein is Protein RecA of Escherichia coli O157:H7 (strain EC4115 / EHEC).